The chain runs to 148 residues: UPF0756 membrane protein YeaL (148 aa).

4 consecutive transmembrane segments (helical) span residues 14 to 34 (ALGFISHNTTVAVSILVLIIV), 51 to 71 (LTVGIIILTIGVMAPIASGTL), 86 to 106 (LVAIAVGVFVSWLGGRGVALM), and 121 to 141 (VLGVALFRGVPVGPLIAAGLV).

Belongs to the UPF0756 family.

The protein resides in the cell membrane. This Salmonella arizonae (strain ATCC BAA-731 / CDC346-86 / RSK2980) protein is UPF0756 membrane protein YeaL.